The chain runs to 76 residues: MASKGLQDLKQQVEGTAQEAVSAAGAAAQQVVDQATEAGQKAMDQLAKTTQETIDKTANQASDTFSGIGKKFGLLK.

In terms of tissue distribution, expressed in adipose tissue (at protein level). Highly expressed in omental and subcutaneous adipose tissues. Expressed in heart, cornea, liver, kidney and spleen.

It is found in the nucleus. Functionally, plays a role in fat cell development; promotes adipogenic differentiation and stimulates transcription initiation of master adipogenesis factors like PPARG and CEBPA at early stages of preadipocyte differentiation. Its overexpression confers resistance to the anticancer chemotherapeutic drug cisplatin. The chain is Adipogenesis regulatory factor (ADIRF) from Homo sapiens (Human).